Here is a 449-residue protein sequence, read N- to C-terminus: 23S rRNA (uracil(1939)-C(5))-methyltransferase RlmD (449 aa).

In terms of domain architecture, TRAM spans 12 to 70 (SKQLSAKQSFSVHQLDHLGAGIAQHQGKVVFIPGALPSETVQAQLTEQKKNYARAKLIK). Residues C83, C89, C92, and C170 each contribute to the [4Fe-4S] cluster site. Residues Q282, F311, N316, E332, D359, and D379 each contribute to the S-adenosyl-L-methionine site. Residue C405 is the Nucleophile of the active site.

The protein belongs to the class I-like SAM-binding methyltransferase superfamily. RNA M5U methyltransferase family. RlmD subfamily.

It carries out the reaction uridine(1939) in 23S rRNA + S-adenosyl-L-methionine = 5-methyluridine(1939) in 23S rRNA + S-adenosyl-L-homocysteine + H(+). Functionally, catalyzes the formation of 5-methyl-uridine at position 1939 (m5U1939) in 23S rRNA. The chain is 23S rRNA (uracil(1939)-C(5))-methyltransferase RlmD from Shewanella sp. (strain MR-4).